Here is a 218-residue protein sequence, read N- to C-terminus: Ras-related protein YPT3 (218 aa).

20-27 (GDSGVGKS) provides a ligand contact to GTP. Residues 42–50 (SKSTIGVEF) carry the Effector region motif. GTP-binding positions include 68-72 (DTAGQ) and 126-129 (NKSD). Positions 186–205 (GDEGATSSAPPKGETINIKD) are disordered. 2 S-geranylgeranyl cysteine lipidation sites follow: Cys-215 and Cys-216.

Belongs to the small GTPase superfamily. Rab family. In terms of tissue distribution, its expression is weak in leaves, higher in stems and roots, but highest in petals, stigma and stamens.

It is found in the cell membrane. Protein transport. Probably involved in vesicular traffic. In Nicotiana plumbaginifolia (Leadwort-leaved tobacco), this protein is Ras-related protein YPT3 (YPT3).